Consider the following 730-residue polypeptide: MVKFKSTEQVLKIIKNKDQIRNFGVIAHVDHGKTTMSDSLLAHSGIIAPSAAGQALAMDFDKEEQERGITIYQANVTLHYTQKEDEYVINMIDTPGHVDFSGRVIRSLRAIDGAVVVCDAVEGIMTQTETVTRMALEELVRPVLFINKVDRLIKELRLTPEKMQETLASVVSNFNQLLDTYAEPEYRDAWKVSIQDASVTFGSAKDKWAINVDVMKEKGITFKDVIDAYSEGKVDELVERAPLADAVLGMVVKHHPPPHVAQKYRIPKIWHGDLESDIGKALLACKDDGPTIMMVVNMVLDKAAGSVAIGRLFSGTIRDGQTVNIIDAKREGRVQSVNFFMGNQREQVGELGAGNIPALIGLADSRAGNTLSSIAGIKVFEGVSYVSEPVVQIAVEPKHPKDLPRLVEVLKQLTIEDPNLVVKIDEESGETIVSGMGVLHLDVATHRIQDAKVEIITSEPLINYRETVSSGCEAVMSKSPNRHNKIFMRVEPLEPTIGDMLRSGRISEMKDKKEMADLLKEQGWDTDTVKRVMKLDPRGNVMINGTKGVQFVQESTDSINSGFDDAMKEGPMCREQMRDCKFTFTHFVPHEDAAHRGLSQLGPASRRACMGALLTAGTSLLEPILAIEVRVPTDMVGNVATVLSSKSGKVMDMIQKGPASIVTGEIPASETFTLSEEMRGQTAGKAMWNSHFKRWAEVPKSRLAESISDIRKRKGLAPDPPTVSEFIDRE.

A tr-type G domain is found at 18 to 238; that stretch reads DQIRNFGVIA…YSEGKVDELV (221 aa). Residues 27–34, 93–97, and 147–150 contribute to the GTP site; these read AHVDHGKT, DTPGH, and NKVD. Residue H595 is modified to Diphthamide. Residues 711–730 form a disordered region; sequence RKRKGLAPDPPTVSEFIDRE.

Belongs to the TRAFAC class translation factor GTPase superfamily. Classic translation factor GTPase family. EF-G/EF-2 subfamily.

It is found in the cytoplasm. Functionally, catalyzes the GTP-dependent ribosomal translocation step during translation elongation. During this step, the ribosome changes from the pre-translocational (PRE) to the post-translocational (POST) state as the newly formed A-site-bound peptidyl-tRNA and P-site-bound deacylated tRNA move to the P and E sites, respectively. Catalyzes the coordinated movement of the two tRNA molecules, the mRNA and conformational changes in the ribosome. This Cenarchaeum symbiosum (strain A) protein is Elongation factor 2.